The primary structure comprises 263 residues: Phosphoinositide-3-kinase-interacting protein 1 (263 aa).

Residues 1–21 (MLLAWVQAFLVSNMLLAEAYG) form the signal peptide. The Extracellular portion of the chain corresponds to 22-168 (SGGCFWDNGH…NSKEKKDLGT (147 aa)). The Kringle domain occupies 24–101 (GCFWDNGHLY…EKRPCENLSC (78 aa)). 3 cysteine pairs are disulfide-bonded: cysteine 25/cysteine 101, cysteine 46/cysteine 82, and cysteine 70/cysteine 96. Residue asparagine 98 is glycosylated (N-linked (GlcNAc...) asparagine). The helical transmembrane segment at 169–189 (LGYVLGITMMVIIVAIGAGII) threads the bilayer. Residues 190–263 (LGYSYKRGKD…LMGQAGTPGA (74 aa)) are Cytoplasmic-facing. Polar residues predominate over residues 242-251 (QTPVDPQEGS). The segment at 242–263 (QTPVDPQEGSTPLMGQAGTPGA) is disordered.

It localises to the cell membrane. In terms of biological role, negative regulator of hepatic phosphatidylinositol 3-kinase (PI3K) activity. This is Phosphoinositide-3-kinase-interacting protein 1 (PIK3IP1) from Pongo abelii (Sumatran orangutan).